The sequence spans 1785 residues: 1,3-beta-glucan synthase component FKS3 (1785 aa).

The next 8 membrane-spanning stretches (helical) occupy residues 337–357, 375–395, 415–435, 444–464, 508–528, 547–567, 572–592, and 712–732; these read FWII…PTLY, LSVI…ATVF, IGLL…LGFF, AYIV…FFAV, LWVF…TLSL, YLLG…LMLL, LFFL…SIVL, and LATP…TVLV. Composition is skewed to basic and acidic residues over residues 791 to 801 and 815 to 824; these read ESSHDEDRLEI and DHTESRKLPT. Residues 791–824 form a disordered region; the sequence is ESSHDEDRLEIPDALYDPRSSPLSDHTESRKLPT. Asn844, Asn874, Asn955, Asn1002, and Asn1170 each carry an N-linked (GlcNAc...) asparagine glycan. Helical transmembrane passes span 1215–1235, 1268–1288, and 1303–1323; these read LFIS…GALN, VSIF…PLLI, and FLHH…QVYS. Asn1360 carries an N-linked (GlcNAc...) asparagine glycan. 5 helical membrane passes run 1370 to 1390, 1394 to 1414, 1475 to 1495, 1514 to 1534, and 1549 to 1569; these read FFML…WFWI, SMCF…DFFI, FAEL…FSFI, LLVT…LFWV, and AGAV…LLDF. Asn1579 carries N-linked (GlcNAc...) asparagine glycosylation. Transmembrane regions (helical) follow at residues 1585-1605, 1655-1675, and 1713-1733; these read ILLI…TTIF, FFLG…PFID, and FSLY…PFFA. Asn1761 is a glycosylation site (N-linked (GlcNAc...) asparagine).

This sequence belongs to the glycosyltransferase 48 family. N-glycosylated.

It localises to the mitochondrion. Its subcellular location is the membrane. The enzyme catalyses [(1-&gt;3)-beta-D-glucosyl](n) + UDP-alpha-D-glucose = [(1-&gt;3)-beta-D-glucosyl](n+1) + UDP + H(+). In terms of biological role, required for spore wall assembly. The polypeptide is 1,3-beta-glucan synthase component FKS3 (FKS3) (Saccharomyces cerevisiae (strain ATCC 204508 / S288c) (Baker's yeast)).